Reading from the N-terminus, the 513-residue chain is Voltage-gated potassium channel regulatory subunit KCNG1 (513 aa).

Over 1-224 (MTLLPGDNSD…DMVERPHSGL (224 aa)) the chain is Cytoplasmic. Residues 184-204 (EEDDALDSEGRDSEGPAEGEG) are disordered. A compositionally biased stretch (basic and acidic residues) spans 191–204 (SEGRDSEGPAEGEG). Residues 225-246 (PGKVFACLSVLFVTVTAVNLSV) traverse the membrane as a helical segment. The Extracellular portion of the chain corresponds to 247-267 (STLPSLREEEEQGHCSQMCHN). Residues 268–289 (VFIVESVCVGWFSLEFLLRLIQ) traverse the membrane as a helical segment. Residues 290–300 (APSKFAFLRSP) lie on the Cytoplasmic side of the membrane. Residues 301-321 (LTLIDLVAILPYYITLLVDGA) traverse the membrane as a helical segment. Over 322 to 338 (AAGRRKPGAGNSYLDKV) the chain is Extracellular. Residues 339-359 (GLVLRVLRALRILYVMRLARH) traverse the membrane as a helical; Voltage-sensor segment. Over 360-374 (SLGLQTLGLTARRCT) the chain is Cytoplasmic. Residues 375–396 (REFGLLLLFLCVAIALFAPLLY) traverse the membrane as a helical segment. Over 397–411 (VIENEMADSPEFTSI) the chain is Extracellular. Positions 412 to 423 (PACYWWAVITMT) form an intramembrane region, helical. The Selectivity filter signature appears at 424-429 (TVGYGD). The stretch at 424-431 (TVGYGDMV) is an intramembrane region. Topologically, residues 432-438 (PRSTPGQ) are extracellular. The helical transmembrane segment at 439 to 467 (VVALSSILSGILLMAFPVTSIFHTFSRSY) threads the bilayer. At 468–513 (LELKQEQERVMFRRAQFLIKTKSQLSVSQDSDILFGSASSDTRDNN) the chain is on the cytoplasmic side.

It belongs to the potassium channel family. G (TC 1.A.1.2) subfamily. Kv6.1/KCNG1 sub-subfamily. As to quaternary structure, heterotetramer with KCNB1. Heterotetramer with KCNB2. In terms of tissue distribution, expressed in brain and placenta, and at much lower levels in kidney and pancreas.

Its subcellular location is the cell membrane. Functionally, regulatory alpha-subunit of the voltage-gated potassium (Kv) channel which, when coassembled with KCNB1 or KCNB2, can modulate their expression and their gating kinetics by acting on deactivation upon repolarization and inactivation during maintained depolarization. Potassium channel subunit that does not form functional channels by itself. The protein is Voltage-gated potassium channel regulatory subunit KCNG1 of Homo sapiens (Human).